We begin with the raw amino-acid sequence, 48 residues long: uncharacterized protein (48 aa).

A helical transmembrane segment spans residues 25–47 (TFASIGVTVGVQIVILLIWGLSW).

The protein localises to the membrane. This is an uncharacterized protein from Archaeoglobus fulgidus (strain ATCC 49558 / DSM 4304 / JCM 9628 / NBRC 100126 / VC-16).